We begin with the raw amino-acid sequence, 451 residues long: UPF0210 protein lmo0534 (451 aa).

Belongs to the UPF0210 family. Homodimer.

The chain is UPF0210 protein lmo0534 from Listeria monocytogenes serovar 1/2a (strain ATCC BAA-679 / EGD-e).